The following is a 319-amino-acid chain: Transaldolase (319 aa).

Catalysis depends on Lys-132, which acts as the Schiff-base intermediate with substrate.

The protein belongs to the transaldolase family. Type 1 subfamily. As to quaternary structure, homodimer.

The protein localises to the cytoplasm. The catalysed reaction is D-sedoheptulose 7-phosphate + D-glyceraldehyde 3-phosphate = D-erythrose 4-phosphate + beta-D-fructose 6-phosphate. Its pathway is carbohydrate degradation; pentose phosphate pathway; D-glyceraldehyde 3-phosphate and beta-D-fructose 6-phosphate from D-ribose 5-phosphate and D-xylulose 5-phosphate (non-oxidative stage): step 2/3. Transaldolase is important for the balance of metabolites in the pentose-phosphate pathway. In Alteromonas mediterranea (strain DSM 17117 / CIP 110805 / LMG 28347 / Deep ecotype), this protein is Transaldolase.